The following is a 1323-amino-acid chain: Receptor tyrosine-protein kinase let-23 (1323 aa).

The first 20 residues, 1 to 20 (MRYPPSIGSILLIIPIFLTF), serve as a signal peptide directing secretion. Residues 21-818 (FGNSNAQLWK…DIASRQRKTR (798 aa)) lie on the Extracellular side of the membrane. N-linked (GlcNAc...) asparagine glycans are attached at residues Asn-91 and Asn-169. 11 cysteine pairs are disulfide-bonded: Cys-220–Cys-228, Cys-224–Cys-236, Cys-244–Cys-251, Cys-248–Cys-262, Cys-263–Cys-271, Cys-267–Cys-279, Cys-282–Cys-291, Cys-295–Cys-322, Cys-326–Cys-337, Cys-341–Cys-356, and Cys-359–Cys-364. Asn-255 carries N-linked (GlcNAc...) asparagine glycosylation. Residue Asn-376 is glycosylated (N-linked (GlcNAc...) asparagine). 20 cysteine pairs are disulfide-bonded: Cys-520-Cys-529, Cys-524-Cys-537, Cys-540-Cys-549, Cys-553-Cys-567, Cys-570-Cys-577, Cys-574-Cys-585, Cys-588-Cys-604, Cys-608-Cys-620, Cys-623-Cys-632, Cys-627-Cys-644, Cys-647-Cys-660, Cys-670-Cys-693, Cys-696-Cys-703, Cys-700-Cys-715, Cys-717-Cys-731, Cys-735-Cys-750, Cys-753-Cys-763, Cys-757-Cys-771, Cys-774-Cys-787, and Cys-791-Cys-805. Asn-561 is a glycosylation site (N-linked (GlcNAc...) asparagine). Asn-655 is a glycosylation site (N-linked (GlcNAc...) asparagine). Asn-746 carries an N-linked (GlcNAc...) asparagine glycan. Asn-776 carries N-linked (GlcNAc...) asparagine glycosylation. Residues 819–839 (MVIIGSVLFGFAVMFLFILLV) traverse the membrane as a helical segment. Over 840–1323 (YWRCQRIGKK…EEVSQKETCL (484 aa)) the chain is Cytoplasmic. The Protein kinase domain maps to 885–1152 (TKLDKKLGAG…EFCKVPQLFL (268 aa)). ATP-binding positions include 891-899 (LGAGAFGTV) and Lys-919. The active-site Proton acceptor is Asp-1010. Over residues 1265-1289 (GQTELSPSNGDYYNQPNTPSSSSGY) the composition is skewed to polar residues. The disordered stretch occupies residues 1265-1323 (GQTELSPSNGDYYNQPNTPSSSSGYYNEPHLKTKKPETSEEAEAVQYENEEVSQKETCL). Basic and acidic residues predominate over residues 1293–1302 (PHLKTKKPET). Over residues 1303–1315 (SEEAEAVQYENEE) the composition is skewed to acidic residues.

It belongs to the protein kinase superfamily. Tyr protein kinase family. EGF receptor subfamily. Expressed in vulval precursor cells (at protein level). Expressed in ALA neurons, 2 ventral head neurons, a single neuron in the tail, pharyngeal-intestinal valve and posterior arcade epithelial cells.

It localises to the apical cell membrane. It is found in the basolateral cell membrane. It carries out the reaction L-tyrosyl-[protein] + ATP = O-phospho-L-tyrosyl-[protein] + ADP + H(+). Tyrosine-protein kinase receptor which, upon binding ligand lin-3, activates 2 signaling cascades: the let-60/Ras and MAP kinase signaling pathway and the let-60-independent phospholipase C-mediated Ca(2+) signaling pathway. Each pathway regulates distinct functions. By activating let-60/Ras, regulates larval development, induction of vulva cell precursors during vulva development, male spicule formation and posterior development of the epidermis. Probably by activating phospholipase plc-3 and inositol 1,4,5-trisphosphate receptor itr-1 signaling cascade downstream of ligand lin-3, plays a role in ovulation by promoting ovulatory gonadal sheath cell contractions. Probably by regulating neuronal transmission in ALA neurons, mediates, independently of let-60/Ras, the decrease in pharyngeal pumping and locomotion during the quiescent state that precedes each larval molt, downstream of lin-3 and upstream of plc-3. The chain is Receptor tyrosine-protein kinase let-23 from Caenorhabditis elegans.